The chain runs to 562 residues: Alpha-1D adrenergic receptor (562 aa).

Over 1–90 (MTFRDILSVT…VGGLVVSAQG (90 aa)) the chain is Extracellular. Disordered stretches follow at residues 13–44 (GPRA…GVPG) and 50–69 (AVVG…EAGA). The segment covering 21 to 44 (GGSGAGGGAGTVGPEGPAVGGVPG) has biased composition (gly residues). N-linked (GlcNAc...) asparagine glycosylation is found at asparagine 60 and asparagine 76. Residues 91–115 (VGVGVFLAAFILTAVAGNLLVILSV) traverse the membrane as a helical segment. The Cytoplasmic portion of the chain corresponds to 116–127 (ACNRHLQTVTNY). A helical transmembrane segment spans residues 128-153 (FIVNLAVADLLLSAAVLPFSATMEVL). Residues 154–163 (GFWPFGRTFC) are Extracellular-facing. A helical transmembrane segment spans residues 164-186 (DVWAAVDVLCCTASILSLCTISV). Over 187-207 (DRYVGVRHSLKYPAIMTERKA) the chain is Cytoplasmic. Residues 208 to 232 (AAILALLWAVALVVSVGPLLGWKEP) form a helical membrane-spanning segment. The Extracellular portion of the chain corresponds to 233–245 (VPPDERFCGITEE). A helical membrane pass occupies residues 246–269 (VGYAIFSSVCSFYLPMAVIVVMYC). The Cytoplasmic portion of the chain corresponds to 270–342 (RVYVVARSTT…KFSREKKAAK (73 aa)). A helical membrane pass occupies residues 343 to 367 (TLAIVVGVFVLCWFPFFFVLPLGSL). The Extracellular portion of the chain corresponds to 368-374 (FPQLKPS). The helical transmembrane segment at 375 to 399 (EGVFKVIFWLGYFNSCVNPLIYPCS) threads the bilayer. Residues 400 to 562 (SREFKRAFLR…DLSNLRETDI (163 aa)) are Cytoplasmic-facing. Cysteine 413 is lipidated: S-palmitoyl cysteine. Residues 444-472 (QPAHRTPRGSPSPHCTPRPGLRRHAGGAG) form a disordered region.

This sequence belongs to the G-protein coupled receptor 1 family. Adrenergic receptor subfamily. ADRA1D sub-subfamily. As to quaternary structure, interacts with FLNA (via filamin repeat 21); increases PKA-mediated phosphorylation of FLNA. Palmitoylated. Palmitoylation by ZDHHC21 may increase the expression of the receptor and regulate downstream signaling.

It is found in the cell membrane. Its function is as follows. This alpha-adrenergic receptor mediates its effect through the influx of extracellular calcium. The polypeptide is Alpha-1D adrenergic receptor (Adra1d) (Mus musculus (Mouse)).